The sequence spans 238 residues: Ethylene-responsive transcription factor ERN3 (238 aa).

A DNA-binding region (AP2/ERF) is located at residues 24 to 81; that stretch reads KFVGVRQRASGKWAAEIKDTSKNIRMWLGTYKTAEEAARAYDEAAFLLRGTNTRTNFS.

It belongs to the AP2/ERF transcription factor family. ERF subfamily. Expressed in roots, root hairs and leaves.

The protein resides in the nucleus. Transcription factor involved in symbiotic nodule signaling in response to rhizobial Nod factors (NFs). Binds to the GCC box (NF-responsive box) of ENOD11 promoter. May act as transcriptional repressor of NF-responsive box-containing target gene promoters in root hairs. The sequence is that of Ethylene-responsive transcription factor ERN3 from Medicago truncatula (Barrel medic).